We begin with the raw amino-acid sequence, 450 residues long: 23S rRNA (uracil(1939)-C(5))-methyltransferase RlmD (450 aa).

Residues 15-73 (KAVPAKNLTVTVASLDPFGQGVARHEGKTVFVTGVLPGEQAEVQLTEEKRQFSHAKLKR) enclose the TRAM domain. [4Fe-4S] cluster contacts are provided by cysteine 86, cysteine 92, cysteine 95, and cysteine 173. Glutamine 276, phenylalanine 305, asparagine 310, glutamate 326, asparagine 353, and aspartate 374 together coordinate S-adenosyl-L-methionine. Cysteine 400 functions as the Nucleophile in the catalytic mechanism.

The protein belongs to the class I-like SAM-binding methyltransferase superfamily. RNA M5U methyltransferase family. RlmD subfamily.

The catalysed reaction is uridine(1939) in 23S rRNA + S-adenosyl-L-methionine = 5-methyluridine(1939) in 23S rRNA + S-adenosyl-L-homocysteine + H(+). Its function is as follows. Catalyzes the formation of 5-methyl-uridine at position 1939 (m5U1939) in 23S rRNA. The protein is 23S rRNA (uracil(1939)-C(5))-methyltransferase RlmD of Pectobacterium atrosepticum (strain SCRI 1043 / ATCC BAA-672) (Erwinia carotovora subsp. atroseptica).